We begin with the raw amino-acid sequence, 141 residues long: Large ribosomal subunit protein uL11 (141 aa).

This sequence belongs to the universal ribosomal protein uL11 family. As to quaternary structure, part of the ribosomal stalk of the 50S ribosomal subunit. Interacts with L10 and the large rRNA to form the base of the stalk. L10 forms an elongated spine to which L12 dimers bind in a sequential fashion forming a multimeric L10(L12)X complex. One or more lysine residues are methylated.

Its function is as follows. Forms part of the ribosomal stalk which helps the ribosome interact with GTP-bound translation factors. In Streptococcus pneumoniae (strain Hungary19A-6), this protein is Large ribosomal subunit protein uL11.